The chain runs to 65 residues: Large ribosomal subunit protein bL35 (65 aa).

The disordered stretch occupies residues 1 to 40 (MPKMKTNSGSKKRFALTGTGKIKRKHAFHSHILTKKSKKR). The span at 21–40 (KIKRKHAFHSHILTKKSKKR) shows a compositional bias: basic residues.

This sequence belongs to the bacterial ribosomal protein bL35 family.

In Bacteroides fragilis (strain ATCC 25285 / DSM 2151 / CCUG 4856 / JCM 11019 / LMG 10263 / NCTC 9343 / Onslow / VPI 2553 / EN-2), this protein is Large ribosomal subunit protein bL35.